The following is a 420-amino-acid chain: Phosphoribosylamine--glycine ligase (420 aa).

One can recognise an ATP-grasp domain in the interval 108-314; it reads KQFMEKYAIP…FAALIAALLN (207 aa). ATP is bound at residue 134 to 195; that stretch reads LDERGVPIVI…EDFLAGEEFS (62 aa). Residues glutamate 284 and asparagine 286 each contribute to the Mg(2+) site.

The protein belongs to the GARS family. Mg(2+) is required as a cofactor. Mn(2+) serves as cofactor.

The catalysed reaction is 5-phospho-beta-D-ribosylamine + glycine + ATP = N(1)-(5-phospho-beta-D-ribosyl)glycinamide + ADP + phosphate + H(+). It participates in purine metabolism; IMP biosynthesis via de novo pathway; N(1)-(5-phospho-D-ribosyl)glycinamide from 5-phospho-alpha-D-ribose 1-diphosphate: step 2/2. This Listeria innocua serovar 6a (strain ATCC BAA-680 / CLIP 11262) protein is Phosphoribosylamine--glycine ligase.